The sequence spans 159 residues: MRLEELKRLQNPLEQVNDGKYSFENHQLAMDAENNIEKYPLNLQPLESKVKIIQRAWREYLQRQEPLGKRSPSPPSVSSEKLSSSVSMNTFSDSSTPFARAPVGKIHPYISWRLQSPGDKLPGGRKVILLYLDQLARPTGFIHTLKEPQIERLGFLTLQ.

In terms of domain architecture, IQ spans 47-67 (ESKVKIIQRAWREYLQRQEPL). Residues 63–88 (RQEPLGKRSPSPPSVSSEKLSSSVSM) form a disordered region. The segment covering 76–87 (SVSSEKLSSSVS) has biased composition (low complexity).

In Homo sapiens (Human), this protein is IQ domain-containing protein J.